A 332-amino-acid polypeptide reads, in one-letter code: Phosphoenolpyruvate transferase (332 aa).

Aspartate 63 lines the 7,8-didemethyl-8-hydroxy-5-deazariboflavin pocket.

Belongs to the CofD family. Homodimer. The cofactor is Mg(2+).

The enzyme catalyses enolpyruvoyl-2-diphospho-5'-guanosine + 7,8-didemethyl-8-hydroxy-5-deazariboflavin = dehydro coenzyme F420-0 + GMP + H(+). It functions in the pathway cofactor biosynthesis; coenzyme F420 biosynthesis. Catalyzes the transfer of the phosphoenolpyruvate moiety from enoylpyruvoyl-2-diphospho-5'-guanosine (EPPG) to 7,8-didemethyl-8-hydroxy-5-deazariboflavin (FO) with the formation of dehydro coenzyme F420-0 and GMP. The protein is Phosphoenolpyruvate transferase of Nocardia farcinica (strain IFM 10152).